An 809-amino-acid chain; its full sequence is Cyclic nucleotide-gated channel beta-3 (809 aa).

Disordered regions lie at residues 1–121 and 153–178; these read MFKS…PPAA and GDLSSPEASPQTAKPTAVPPVKESDD. The Cytoplasmic portion of the chain corresponds to 1-218; the sequence is MFKSLTKVNK…SIDSYTDRLY (218 aa). Basic and acidic residues predominate over residues 22–31; sequence QSSRRNEEGS. Polar residues predominate over residues 32–43; it reads HPSNQSQQTTAQ. Basic and acidic residues predominate over residues 44-53; the sequence is EENKGEEKSL. The segment covering 55–88 has biased composition (polar residues); it reads TKSTPVTSEEPHTNIQDKLSKKNSSGDLTTNPDP. A helical transmembrane segment spans residues 219 to 242; it reads LLWLLLVTLAYNWNCCFIPLRLVF. Topologically, residues 243 to 249 are extracellular; sequence PYQTADN. The helical transmembrane segment at 250–270 threads the bilayer; the sequence is IHYWLIADIICDIIYLYDMLF. Residues 271–299 lie on the Cytoplasmic side of the membrane; sequence IQPRLQFVRGGDIIVDSNELRKHYRTSTK. Residues 300–317 traverse the membrane as a helical segment; the sequence is FQLDVASIIPFDICYLFF. Over 318-320 the chain is Extracellular; the sequence is GFN. Residues 321-335 form a helical membrane-spanning segment; the sequence is PMFRANRMLKYTSFF. The Cytoplasmic segment spans residues 336–348; it reads EFNHHLESIMDKA. Residues 348 to 447 are ion conduction pathway; that stretch reads AYIYRVIRTT…IGQMRDVIGA (100 aa). Residues 349-371 form a helical membrane-spanning segment; the sequence is YIYRVIRTTGYLLFILHINACVY. Topologically, residues 372–393 are extracellular; sequence YWASNYEGIGTTRWVYDGEGNE. The next 2 helical transmembrane spans lie at 394–420 and 421–445; these read YLRCYYWAVRTLITIGGLPEPQTLFEI and VFQLLNFFSGVFVFSSLIGQMRDVI. A selectivity filter region spans residues 407 to 410; that stretch reads TIGG. The Cytoplasmic segment spans residues 446–809; the sequence is GAATANQNYF…TIEVKEKAKQ (364 aa). Residues 450–526 form a C-linker region; that stretch reads ANQNYFRACM…SIISKVDLFK (77 aa). Residues 530-646 form a cyclic nucleotide-binding domain region; the sequence is TQMIYDMLLR…ILMKKARVLL (117 aa). 3',5'-cyclic GMP-binding residues include glycine 591, glutamate 592, arginine 604, and threonine 605. A disordered region spans residues 698–776; sequence QAAQKKENSE…PHSVRRTVLP (79 aa). Residues 716–755 show a composition bias toward basic and acidic residues; it reads NEDKQKENEDKQKENEDKGKENEDKDKGREPEEKPLDRPE.

The protein belongs to the cyclic nucleotide-gated cation channel (TC 1.A.1.5) family. CNGB3 subfamily. Forms heterotetrameric channels composed of CNGA3 and CNGB3 subunits with 3:1 stoichiometry. As to expression, expressed specifically in the retina.

The protein localises to the cell membrane. It carries out the reaction Ca(2+)(in) = Ca(2+)(out). The catalysed reaction is Na(+)(in) = Na(+)(out). It catalyses the reaction K(+)(in) = K(+)(out). The enzyme catalyses NH4(+)(in) = NH4(+)(out). It carries out the reaction Rb(+)(in) = Rb(+)(out). The catalysed reaction is Li(+)(in) = Li(+)(out). It catalyses the reaction Cs(+)(in) = Cs(+)(out). Functionally, pore-forming subunit of the cone cyclic nucleotide-gated channel. Mediates cone photoresponses at bright light converting transient changes in intracellular cGMP levels into electrical signals. In the dark, cGMP levels are high and keep the channel open enabling a steady inward current carried by Na(+) and Ca(2+) ions that leads to membrane depolarization and neurotransmitter release from synaptic terminals. Upon photon absorption cGMP levels decline leading to channel closure and membrane hyperpolarization that ultimately slows neurotransmitter release and signals the presence of light, the end point of the phototransduction cascade. Conducts cGMP- and cAMP-gated ion currents, with permeability for monovalent and divalent cations. The chain is Cyclic nucleotide-gated channel beta-3 from Homo sapiens (Human).